Reading from the N-terminus, the 469-residue chain is Trigger factor (469 aa).

A PPIase FKBP-type domain is found at G162–P243. A disordered region spans residues G438 to K469. Acidic residues predominate over residues A444–K469.

It belongs to the FKBP-type PPIase family. Tig subfamily.

The protein resides in the cytoplasm. The enzyme catalyses [protein]-peptidylproline (omega=180) = [protein]-peptidylproline (omega=0). Functionally, involved in protein export. Acts as a chaperone by maintaining the newly synthesized protein in an open conformation. Functions as a peptidyl-prolyl cis-trans isomerase. This is Trigger factor from Mycolicibacterium smegmatis (strain ATCC 700084 / mc(2)155) (Mycobacterium smegmatis).